Reading from the N-terminus, the 228-residue chain is HTH-type transcriptional activator FasR (228 aa).

Positions methionine 1–glutamate 39 are disordered. The 61-residue stretch at aspartate 38 to leucine 98 folds into the HTH tetR-type domain. The segment at residues glycine 61–phenylalanine 80 is a DNA-binding region (H-T-H motif).

In terms of assembly, homodimer.

With respect to regulation, fasR:DNA binding is regulated by long-chain acyl-CoAs (C14- to C26-CoA), which act as effector molecules that modulate the affinity of FasR for its DNA binding sequences and therefore modulate the expression of the essential fas-acpS operon. FasR activity is not affected by mycolic acid biosynthesis intermediates. Functionally, transcriptional activator that plays a central role in sensing mycobacterial long-chain fatty acids and regulating lipid biosynthesis. Activates the expression of the genes encoding the fatty acid synthase (fas) and the 4-phosphopantetheinyl transferase (acpS), whose products are involved in the fatty acid and mycolic acid biosynthesis. Specifically binds to three conserved operator sequences present in the fas-acpS promoter region. Not essential for M.tuberculosis viability, although it is required for the optimal growth in vitro and for virulence in macrophages and in a mouse model of infection. The sequence is that of HTH-type transcriptional activator FasR from Mycobacterium tuberculosis (strain ATCC 25618 / H37Rv).